A 59-amino-acid chain; its full sequence is MRFKIKKCPKCGEYTLKETCPLCGEKTKLAHPPKFSPEDPYGEYRRRLKKETLGIGVKK.

The protein belongs to the NOP10 family.

Its function is as follows. Involved in ribosome biogenesis; more specifically in 18S rRNA pseudouridylation and in cleavage of pre-rRNA. This is Ribosome biogenesis protein Nop10 from Thermococcus sibiricus (strain DSM 12597 / MM 739).